Consider the following 93-residue polypeptide: UPF0358 protein OB1428 (93 aa).

This sequence belongs to the UPF0358 family.

This is UPF0358 protein OB1428 from Oceanobacillus iheyensis (strain DSM 14371 / CIP 107618 / JCM 11309 / KCTC 3954 / HTE831).